Here is a 393-residue protein sequence, read N- to C-terminus: Phosphoglycerate kinase (393 aa).

Substrate-binding positions include 21 to 23, arginine 37, 60 to 63, arginine 119, and arginine 152; these read DFN and HLGR. ATP contacts are provided by residues lysine 202, glutamate 323, and 349 to 352; that span reads GGDT.

This sequence belongs to the phosphoglycerate kinase family. In terms of assembly, monomer.

The protein resides in the cytoplasm. It catalyses the reaction (2R)-3-phosphoglycerate + ATP = (2R)-3-phospho-glyceroyl phosphate + ADP. The protein operates within carbohydrate degradation; glycolysis; pyruvate from D-glyceraldehyde 3-phosphate: step 2/5. In Desulforudis audaxviator (strain MP104C), this protein is Phosphoglycerate kinase.